The sequence spans 123 residues: uncharacterized protein (123 aa).

Transmembrane regions (helical) follow at residues 9–31 (LLLR…WISF), 38–56 (VLTL…VFAV), 67–91 (VIAV…AALY), and 98–114 (VSIV…IISA).

This sequence to E.coli YhgE.

The protein localises to the cell membrane. This is an uncharacterized protein from Bacillus subtilis (strain 168).